The chain runs to 336 residues: Fructose-1,6-bisphosphatase class 1 (336 aa).

The Mg(2+) site is built by Glu90, Asp112, Leu114, and Asp115. Residues 115–118 (DGSS), Asn207, and Lys273 contribute to the substrate site. Glu279 provides a ligand contact to Mg(2+).

Belongs to the FBPase class 1 family. In terms of assembly, homotetramer. The cofactor is Mg(2+).

It is found in the cytoplasm. The enzyme catalyses beta-D-fructose 1,6-bisphosphate + H2O = beta-D-fructose 6-phosphate + phosphate. It functions in the pathway carbohydrate biosynthesis; gluconeogenesis. In Xanthomonas oryzae pv. oryzae (strain PXO99A), this protein is Fructose-1,6-bisphosphatase class 1.